The sequence spans 953 residues: ABC transporter A family member 11 (953 aa).

The next 6 membrane-spanning stretches (helical) occupy residues Cys-33–Met-53, Gly-230–Val-250, Thr-277–Phe-297, Phe-307–Ala-327, Val-341–Pro-361, and Val-417–Leu-437. Residues Val-519–Ser-764 enclose the ABC transporter domain. Gly-565 to Thr-572 contacts ATP.

This sequence belongs to the ABC transporter superfamily. ABCA family. CPR flippase (TC 3.A.1.211) subfamily.

It localises to the membrane. This is ABC transporter A family member 11 (ABCA11) from Arabidopsis thaliana (Mouse-ear cress).